The sequence spans 496 residues: Glycerol kinase (496 aa).

Threonine 12 is an ADP binding site. Residues threonine 12, threonine 13, and serine 14 each coordinate ATP. A sn-glycerol 3-phosphate-binding site is contributed by threonine 12. Arginine 16 serves as a coordination point for ADP. Sn-glycerol 3-phosphate contacts are provided by arginine 82, glutamate 83, and tyrosine 134. Glycerol is bound by residues arginine 82, glutamate 83, and tyrosine 134. Histidine 230 bears the Phosphohistidine; by HPr mark. Residue aspartate 244 participates in sn-glycerol 3-phosphate binding. Residues aspartate 244 and glutamine 245 each coordinate glycerol. Residues threonine 266 and glycine 309 each contribute to the ADP site. Positions 266, 309, 313, and 410 each coordinate ATP. The ADP site is built by glycine 410 and asparagine 414.

Belongs to the FGGY kinase family. In terms of assembly, homotetramer and homodimer (in equilibrium). The phosphoenolpyruvate-dependent sugar phosphotransferase system (PTS), including enzyme I, and histidine-containing protein (HPr) are required for the phosphorylation, which leads to the activation of the enzyme.

It carries out the reaction glycerol + ATP = sn-glycerol 3-phosphate + ADP + H(+). It participates in polyol metabolism; glycerol degradation via glycerol kinase pathway; sn-glycerol 3-phosphate from glycerol: step 1/1. With respect to regulation, activated by phosphorylation and inhibited by fructose 1,6-bisphosphate (FBP). Key enzyme in the regulation of glycerol uptake and metabolism. Catalyzes the phosphorylation of glycerol to yield sn-glycerol 3-phosphate. The polypeptide is Glycerol kinase (Bacillus thuringiensis (strain Al Hakam)).